The following is a 101-amino-acid chain: Histone H1-like protein EM6 (101 aa).

2 stretches are compositionally biased toward basic residues: residues 1–35 (AKKR…HVRK) and 58–101 (AKKK…RRRR). The interval 1–101 (AKKRSRSRKR…SRTARSRRRR (101 aa)) is disordered. 4 repeat units span residues 3-4 (KR), 5-6 (SR), 7-8 (SR), and 9-10 (KR). The segment at 3-22 (KRSRSRKRSASRKRSRSRKR) is 10 X 2 AA approximate tandem repeats of [SK]-R. Residues 11-12 (SA) form a 5; approximate repeat. Repeat copies occupy residues 13–14 (SR), 15–16 (KR), 17–18 (SR), 19–20 (SR), and 21–22 (KR). Residues 32–65 (HVRKALAAGMKNHLLAHPKGSNNFILAKKKAPRR) are globular.

Sperm.

It is found in the nucleus. The protein resides in the chromosome. In Ensis minor (Razor shell), this protein is Histone H1-like protein EM6.